Consider the following 103-residue polypeptide: MERVRDLASEKAAVIFTKSSCCMCHSIKTLFYELGASPAIHELDKDPQGPDMERALFRVFGSNPAVPAVFVGGRYVGSAKDVISFHVDGSLKQMLKASNAIWL.

Residues 1–102 (MERVRDLASE…QMLKASNAIW (102 aa)) form the Glutaredoxin domain. A disulfide bridge connects residues cysteine 21 and cysteine 24.

Belongs to the glutaredoxin family. CC-type subfamily.

Its subcellular location is the cytoplasm. Functionally, has a glutathione-disulfide oxidoreductase activity in the presence of NADPH and glutathione reductase. Reduces low molecular weight disulfides and proteins. This Arabidopsis thaliana (Mouse-ear cress) protein is Putative glutaredoxin-C12 (GRXC12).